Reading from the N-terminus, the 734-residue chain is Polyribonucleotide nucleotidyltransferase (734 aa).

Residues aspartate 505 and aspartate 511 each contribute to the Mg(2+) site. Residues 572–631 enclose the KH domain; the sequence is PKLTTIQIPVDAIGMVIGKGGETIRSITEETGAEINIEDDGTVTIASASGEGASAALETI. The S1 motif domain maps to 641-715; sequence GTVYSGKVRD…GKTRFALSIK (75 aa).

This sequence belongs to the polyribonucleotide nucleotidyltransferase family. It depends on Mg(2+) as a cofactor.

The protein resides in the cytoplasm. The catalysed reaction is RNA(n+1) + phosphate = RNA(n) + a ribonucleoside 5'-diphosphate. Involved in mRNA degradation. Catalyzes the phosphorolysis of single-stranded polyribonucleotides processively in the 3'- to 5'-direction. The chain is Polyribonucleotide nucleotidyltransferase from Prosthecochloris aestuarii (strain DSM 271 / SK 413).